The chain runs to 483 residues: Septin-8 (483 aa).

Residues 1 to 16 are compositionally biased toward basic and acidic residues; that stretch reads MAATDLERFSNAEPEP. Residues 1–22 form a disordered region; the sequence is MAATDLERFSNAEPEPRSLSLG. A2 is modified (N-acetylalanine). S10 carries the phosphoserine modification. The 267-residue stretch at 41–307 folds into the Septin-type G domain; the sequence is QGFSFNILCV…ELYRRCKLEE (267 aa). Residues 51 to 58 form a G1 motif region; sequence GETGIGKS. GTP contacts are provided by residues 51–58, G106, 187–195, G241, and R256; these read GETGIGKS and KADTISKSE. The segment at 103–106 is G3 motif; sequence DAVG. The segment at 186-189 is G4 motif; that stretch reads AKAD. Positions 320–413 form a coiled coil; sequence FSLQETYEAK…AVEALQSQAL (94 aa). Positions 411–420 are enriched in polar residues; the sequence is QALHATSQQP. A disordered region spans residues 411–443; it reads QALHATSQQPLRKDKDKKNRSDIGAHQPGMSLS. The span at 421–433 shows a compositional bias: basic and acidic residues; that stretch reads LRKDKDKKNRSDI.

The protein belongs to the TRAFAC class TrmE-Era-EngA-EngB-Septin-like GTPase superfamily. Septin GTPase family. Septins polymerize into heterooligomeric protein complexes that form filaments, and can associate with cellular membranes, actin filaments and microtubules. GTPase activity is required for filament formation. Interacts with CDK14. Interacts with SEPTIN5. Interacts with SEPTIN7. Interacts with SEPTIN4. Interacts with VAMP2; the interaction inhibits interaction of VAMP2 with SYP. Interacts with STX1A. In terms of tissue distribution, widely expressed, including in brain, heart and platelets; most abundant in aorta. Isoform 2 is expressed at low levels in specific brain areas, such as occipital pole, frontal lobe, temporal lobe and putamen. Isoform 1 and 3 are highly expressed in specific brain areas, such as occipital pole, frontal lobe, temporal lobe and putamen. Isoform 2 is highly expressed in prostate, testis and ovary. Isoform 1 and isoform 3 are expressed at low levels in prostate, testis and ovary.

Its subcellular location is the cytoplasm. The protein resides in the cytoskeleton. It localises to the synapse. It is found in the cell projection. The protein localises to the axon. Its subcellular location is the cytoplasmic vesicle. The protein resides in the secretory vesicle. It localises to the synaptic vesicle membrane. It is found in the presynapse. Its function is as follows. Filament-forming cytoskeletal GTPase. May play a role in platelet secretion. Seems to participate in the process of SNARE complex formation in synaptic vesicles. Stabilizes BACE1 protein levels and promotes the sorting and accumulation of BACE1 to the recycling or endosomal compartments, modulating the beta-amyloidogenic processing of APP. The sequence is that of Septin-8 from Homo sapiens (Human).